The primary structure comprises 564 residues: Esterase FE4 (564 aa).

Positions 1-23 are cleaved as a signal peptide; sequence MKNTCGILLNLFLFIGCFLTCSA. A glycan (N-linked (GlcNAc...) asparagine) is linked at N81. Cysteines 89 and 106 form a disulfide. The active-site Acyl-ester intermediate is the S214. A disulfide bridge links C266 with C277. N-linked (GlcNAc...) asparagine glycosylation occurs at N269. E339 acts as the Charge relay system in catalysis. Residues N371, N404, and N443 are each glycosylated (N-linked (GlcNAc...) asparagine). H463 serves as the catalytic Charge relay system.

It belongs to the type-B carboxylesterase/lipase family.

It carries out the reaction a carboxylic ester + H2O = an alcohol + a carboxylate + H(+). Its function is as follows. Overproduction of nonspecific esterases is a common mechanism of resistance to organophosphate insecticides. This is Esterase FE4 from Myzus persicae (Green peach aphid).